The sequence spans 150 residues: Troponin C, isotype gamma (150 aa).

Position 1 is an N-acetylmethionine (Met1). EF-hand domains lie at 7–42 (EQLS…MGVK), 43–78 (ISEK…FLIE), 83–118 (ALKA…LDNR), and 119–150 (LTED…MMSG). Residues Asp56, Asp58, Ser60, Glu62, and Glu67 each coordinate Ca(2+). Positions 132, 134, 136, 138, and 143 each coordinate Ca(2+).

This sequence belongs to the troponin C family.

In terms of biological role, troponin is the central regulatory protein of striated muscle contraction. Tn consists of three components: Tn-I which is the inhibitor of actomyosin ATPase, Tn-T which contains the binding site for tropomyosin and Tn-C. The binding of calcium to Tn-C abolishes the inhibitory action of Tn on actin filaments. This Astacus leptodactylus (Turkish narrow-clawed crayfish) protein is Troponin C, isotype gamma.